The sequence spans 440 residues: Protein dumpy-20 (440 aa).

The tract at residues 96 to 119 (ILSDPSLHGSNSSSSTSDVGSSVD) is disordered. Residues 98–119 (SDPSLHGSNSSSSTSDVGSSVD) show a composition bias toward low complexity. 2 consecutive BED-type zinc fingers follow at residues 137–186 (PTEN…YQKV) and 350–399 (KTEH…YNDV). Cys-156, Cys-159, His-174, His-179, Cys-369, Cys-372, His-387, and His-392 together coordinate Zn(2+).

In terms of biological role, may be directly or indirectly involved in cuticle function. This is Protein dumpy-20 (dpy-20) from Caenorhabditis elegans.